Here is a 307-residue protein sequence, read N- to C-terminus: Probable GTP 3',8-cyclase (307 aa).

Residues 5 to 227 (AYGRRISSLR…RRTKYYLGGA (223 aa)) form the Radical SAM core domain. Arg-14 contributes to the GTP binding site. [4Fe-4S] cluster contacts are provided by Cys-21 and Cys-25. Tyr-27 serves as a coordination point for S-adenosyl-L-methionine. A [4Fe-4S] cluster-binding site is contributed by Cys-28. Position 61 (Lys-61) interacts with GTP. Gly-65 contributes to the S-adenosyl-L-methionine binding site. Residue Thr-89 participates in GTP binding. S-adenosyl-L-methionine is bound at residue Ser-113. Lys-151 serves as a coordination point for GTP. Positions 241 and 244 each coordinate [4Fe-4S] cluster. Residue 246–248 (RLR) coordinates GTP. Cys-258 is a binding site for [4Fe-4S] cluster.

It belongs to the radical SAM superfamily. MoaA family. The cofactor is [4Fe-4S] cluster.

The enzyme catalyses GTP + AH2 + S-adenosyl-L-methionine = (8S)-3',8-cyclo-7,8-dihydroguanosine 5'-triphosphate + 5'-deoxyadenosine + L-methionine + A + H(+). It functions in the pathway cofactor biosynthesis; molybdopterin biosynthesis. Functionally, catalyzes the cyclization of GTP to (8S)-3',8-cyclo-7,8-dihydroguanosine 5'-triphosphate. The polypeptide is Probable GTP 3',8-cyclase (Methanocella arvoryzae (strain DSM 22066 / NBRC 105507 / MRE50)).